Here is a 157-residue protein sequence, read N- to C-terminus: Eukaryotic translation initiation factor 5A-2 (157 aa).

An N-acetylserine modification is found at S2. Phosphoserine is present on S2. The residue at position 7 (T7) is a Phosphothreonine. Hypusine is present on K51. S74 is modified (phosphoserine). Residue K86 forms a Glycyl lysine isopeptide (Lys-Gly) (interchain with G-Cter in ubiquitin) linkage.

Belongs to the eIF-5A family. As to quaternary structure, homodimer. Binds to 80S ribosomes. Actively translating ribosomes show mutually exclusive binding of eIF5a (HYP2 or ANB1) and EFT1/eEF2. Interacts with DYS1 and LIA1. Lys-51 undergoes hypusination, a unique post-translational modification that consists in the addition of a butylamino group from spermidine to lysine side chain, leading to the formation of the unusual amino acid hypusine. eIF-5As are the only known proteins to undergo this modification, which is essential for their function.

It is found in the cytoplasm. Functionally, translation factor that promotes translation elongation and termination, particularly upon ribosome stalling at specific amino acid sequence contexts. Binds between the exit (E) and peptidyl (P) site of the ribosome and promotes rescue of stalled ribosome: specifically required for efficient translation of polyproline-containing peptides as well as other motifs that stall the ribosome. Acts as ribosome quality control (RQC) cofactor by joining the RQC complex to facilitate peptidyl transfer during CAT tailing step. Involved in actin dynamics and cell cycle progression, mRNA decay and probably in a pathway involved in stress response and maintenance of cell wall integrity. This chain is Eukaryotic translation initiation factor 5A-2 (ANB1), found in Saccharomyces cerevisiae (strain ATCC 204508 / S288c) (Baker's yeast).